The following is a 322-amino-acid chain: Glycerol-3-phosphate dehydrogenase [NAD(P)+] (322 aa).

4 residues coordinate NADPH: Trp-11, Arg-31, Arg-32, and Lys-101. The sn-glycerol 3-phosphate site is built by Lys-101 and Gly-130. Ala-134 contacts NADPH. Lys-184, Asp-237, Ser-247, Arg-248, and Asn-249 together coordinate sn-glycerol 3-phosphate. The Proton acceptor role is filled by Lys-184. Arg-248 contacts NADPH. NADPH is bound by residues Val-270 and Glu-272.

The protein belongs to the NAD-dependent glycerol-3-phosphate dehydrogenase family.

Its subcellular location is the cytoplasm. The catalysed reaction is sn-glycerol 3-phosphate + NAD(+) = dihydroxyacetone phosphate + NADH + H(+). It carries out the reaction sn-glycerol 3-phosphate + NADP(+) = dihydroxyacetone phosphate + NADPH + H(+). It functions in the pathway membrane lipid metabolism; glycerophospholipid metabolism. Catalyzes the reduction of the glycolytic intermediate dihydroxyacetone phosphate (DHAP) to sn-glycerol 3-phosphate (G3P), the key precursor for phospholipid synthesis. The protein is Glycerol-3-phosphate dehydrogenase [NAD(P)+] of Thermus thermophilus (strain ATCC BAA-163 / DSM 7039 / HB27).